Reading from the N-terminus, the 224-residue chain is 7-cyano-7-deazaguanine synthase (224 aa).

Residue 14 to 24 (FSGGQDSTTCL) participates in ATP binding. Zn(2+)-binding residues include Cys190, Cys198, Cys201, and Cys204.

Belongs to the QueC family. Zn(2+) serves as cofactor.

It carries out the reaction 7-carboxy-7-deazaguanine + NH4(+) + ATP = 7-cyano-7-deazaguanine + ADP + phosphate + H2O + H(+). It functions in the pathway purine metabolism; 7-cyano-7-deazaguanine biosynthesis. In terms of biological role, catalyzes the ATP-dependent conversion of 7-carboxy-7-deazaguanine (CDG) to 7-cyano-7-deazaguanine (preQ(0)). The sequence is that of 7-cyano-7-deazaguanine synthase from Haemophilus ducreyi (strain 35000HP / ATCC 700724).